The following is a 477-amino-acid chain: Aspartyl/glutamyl-tRNA(Asn/Gln) amidotransferase subunit B (477 aa).

Belongs to the GatB/GatE family. GatB subfamily. As to quaternary structure, heterotrimer of A, B and C subunits.

The catalysed reaction is L-glutamyl-tRNA(Gln) + L-glutamine + ATP + H2O = L-glutaminyl-tRNA(Gln) + L-glutamate + ADP + phosphate + H(+). The enzyme catalyses L-aspartyl-tRNA(Asn) + L-glutamine + ATP + H2O = L-asparaginyl-tRNA(Asn) + L-glutamate + ADP + phosphate + 2 H(+). Its function is as follows. Allows the formation of correctly charged Asn-tRNA(Asn) or Gln-tRNA(Gln) through the transamidation of misacylated Asp-tRNA(Asn) or Glu-tRNA(Gln) in organisms which lack either or both of asparaginyl-tRNA or glutaminyl-tRNA synthetases. The reaction takes place in the presence of glutamine and ATP through an activated phospho-Asp-tRNA(Asn) or phospho-Glu-tRNA(Gln). The polypeptide is Aspartyl/glutamyl-tRNA(Asn/Gln) amidotransferase subunit B (Lactococcus lactis subsp. cremoris (strain MG1363)).